We begin with the raw amino-acid sequence, 117 residues long: Large ribosomal subunit protein bL20 (117 aa).

It belongs to the bacterial ribosomal protein bL20 family.

Functionally, binds directly to 23S ribosomal RNA and is necessary for the in vitro assembly process of the 50S ribosomal subunit. It is not involved in the protein synthesizing functions of that subunit. The sequence is that of Large ribosomal subunit protein bL20 from Aliivibrio salmonicida (strain LFI1238) (Vibrio salmonicida (strain LFI1238)).